The sequence spans 276 residues: uncharacterized protein (276 aa).

In terms of domain architecture, AB hydrolase-1 spans 20–137 (PVLIFIPGAN…PPINTFLPDS (118 aa)). Residues 57-76 (GESELTEPLPDSASNPDSDY) are disordered.

The protein belongs to the AB hydrolase superfamily.

This is an uncharacterized protein from Staphylococcus aureus (strain USA300).